Reading from the N-terminus, the 365-residue chain is Cytoplasmic tRNA 2-thiolation protein 1 (365 aa).

It belongs to the TtcA family. CTU1/NCS6/ATPBD3 subfamily.

It localises to the cytoplasm. It functions in the pathway tRNA modification; 5-methoxycarbonylmethyl-2-thiouridine-tRNA biosynthesis. In terms of biological role, plays a central role in 2-thiolation of mcm(5)S(2)U at tRNA wobble positions of tRNA(Lys), tRNA(Glu) and tRNA(Gln). Directly binds tRNAs and probably acts by catalyzing adenylation of tRNAs, an intermediate required for 2-thiolation. It is unclear whether it acts as a sulfurtransferase that transfers sulfur from thiocarboxylated URM1 onto the uridine of tRNAs at wobble position. Prior mcm(5) tRNA modification by the elongator complex is required for 2-thiolation. May also be involved in protein urmylation. The chain is Cytoplasmic tRNA 2-thiolation protein 1 from Yarrowia lipolytica (strain CLIB 122 / E 150) (Yeast).